Consider the following 1480-residue polypeptide: Heme-responsive zinc finger transcription factor HAP1 (1480 aa).

The segment covering 1–50 (MSNTPYNSSVPSIASMTQSSVSRSPNMHTATTPGANTSSNSPPLHMSSDS) has biased composition (polar residues). The disordered stretch occupies residues 1-56 (MSNTPYNSSVPSIASMTQSSVSRSPNMHTATTPGANTSSNSPPLHMSSDSSKIKRK). The Zn(2+) site is built by Cys-64, Cys-67, Cys-74, Cys-81, Cys-84, and Cys-93. The zn(2)-C6 fungal-type DNA-binding region spans 64 to 93 (CTICRKRKVKCDKLRPHCQQCTKTGVAHLC). Positions 105–134 (EKELLKDNELKKLRERVKSLEKTLSKVHSS) form a coiled coil. A disordered region spans residues 126-208 (KTLSKVHSSP…ANSSSLSISN (83 aa)). The segment covering 130-142 (KVHSSPSSNSLKS) has biased composition (low complexity). Polar residues-rich tracts occupy residues 143–152 (YNTPESSNLF) and 160–176 (TLVN…SHMH). A compositionally biased stretch (low complexity) spans 177-208 (QQQQQQQQQEQQQDFSRSANANANSSSLSISN). Positions 244 to 441 (KGDPYLKLLW…NTIPHHQPQS (198 aa)) are heme-responsive; required for HMC formation. HRM repeat units lie at residues 280-285 (KCPINH), 296-301 (KCPVDH), 320-325 (KCPVDH), 344-349 (RCPVDH), 386-391 (KCPVDH), and 412-417 (RCPIDH). Composition is skewed to polar residues over residues 429–444 (STHN…SGSH) and 703–731 (QLNA…NPTL). Disordered stretches follow at residues 429 to 456 (STHN…RKHD) and 703 to 764 (QLNA…KENQ). The segment covering 732-756 (NNNMSAATTNSSSRSGSADSRSGSN) has biased composition (low complexity). An HRM 7 repeat occupies 1189-1194 (KCPVYQ). Residues 1381-1408 (TANTDTSANGSALSTLTSPQGSDLASNS) are disordered. Residues 1385–1408 (DTSANGSALSTLTSPQGSDLASNS) show a composition bias toward polar residues.

As to quaternary structure, binds DNA as a homodimer. Interacts with SRO9 and YDJ1. In the absence of heme, binds to at least four cellular proteins, including YDJ1 and SRO9, forming a high-molecular-weight complex (HMC) which results in repression of its activity and dictates its DNA-binding specificity.

It localises to the nucleus. Its function is as follows. Regulation of oxygen dependent gene expression. It modulates the expression of Iso-1 (CYP1) and Iso-2 (CYP3) cytochrome c. In response to heme, promotes transcription of genes encoding functions required for respiration, controlling oxidative damage and repression of anaerobic genes. Binds to the sequence 5'-CGGNNNTNNCGG-3'. Is non-functional in terms of iso-1 cytochrome c expression in strain S288c and its derivatives. In Saccharomyces cerevisiae (strain Kyokai no. 7 / NBRC 101557) (Baker's yeast), this protein is Heme-responsive zinc finger transcription factor HAP1 (HAP1).